The following is a 204-amino-acid chain: Transcription initiation factor TFIID subunit 11b (204 aa).

The disordered stretch occupies residues 38-60 (PFEAAMEEQEESPVETEQTLEGD). Residues 42 to 58 (AMEEQEESPVETEQTLE) are compositionally biased toward acidic residues. In terms of domain architecture, Histone-fold spans 106–195 (FTEEQMSRYE…RRLKLQGKVP (90 aa)).

Belongs to the TAF11 family. In terms of assembly, component of the TFIID complex. TFIID is composed of TATA binding protein (TBP) and a number of TBP-associated factors (TAFs) whose MWs range from 14-217 kDa. Expressed in roots, leaves and inflorescences.

It localises to the nucleus. Its function is as follows. TAFs are components of the transcription factor IID (TFIID) complex that is essential for mediating regulation of RNA polymerase transcription. This Arabidopsis thaliana (Mouse-ear cress) protein is Transcription initiation factor TFIID subunit 11b (TAF11B).